Reading from the N-terminus, the 208-residue chain is Protein IncB (208 aa).

In terms of biological role, this protein is thought to be cis acting and to contain the putative attachment site on the DNA for the cellular partition apparatus. The polypeptide is Protein IncB (incB) (Escherichia coli).